Reading from the N-terminus, the 434-residue chain is UDP-glucose 6-dehydrogenase (434 aa).

Residues 2–19, V11, D30, K35, T121, and E152 each bind NAD(+); that span reads NITFIGSGYVGLVSGVMM. Substrate is bound by residues 148 to 152, K204, N208, 249 to 253, and G257; these read EFLRE and FLNAG. The active-site Nucleophile is C260. K263 serves as a coordination point for NAD(+). K321 lines the substrate pocket. R328 serves as a coordination point for NAD(+).

This sequence belongs to the UDP-glucose/GDP-mannose dehydrogenase family.

It catalyses the reaction UDP-alpha-D-glucose + 2 NAD(+) + H2O = UDP-alpha-D-glucuronate + 2 NADH + 3 H(+). It functions in the pathway nucleotide-sugar biosynthesis; UDP-alpha-D-glucuronate biosynthesis; UDP-alpha-D-glucuronate from UDP-alpha-D-glucose: step 1/1. The protein is UDP-glucose 6-dehydrogenase (udg) of Rickettsia bellii (strain RML369-C).